A 344-amino-acid polypeptide reads, in one-letter code: Aromatic amino acid aminotransferase (344 aa).

K213 bears the N6-(pyridoxal phosphate)lysine mark.

Belongs to the class-II pyridoxal-phosphate-dependent aminotransferase family. As to quaternary structure, homodimer. Pyridoxal 5'-phosphate is required as a cofactor.

It carries out the reaction an aromatic L-alpha-amino acid + 2-oxoglutarate = an aromatic oxo-acid + L-glutamate. Its function is as follows. Aminotransferase that catalyzes the conversion of aromatic amino acids and 2-oxoglutarate into corresponding aromatic oxo acids and L-glutamate. The polypeptide is Aromatic amino acid aminotransferase (Corynebacterium diphtheriae (strain ATCC 700971 / NCTC 13129 / Biotype gravis)).